Reading from the N-terminus, the 94-residue chain is Co-chaperonin GroES (94 aa).

It belongs to the GroES chaperonin family. As to quaternary structure, heptamer of 7 subunits arranged in a ring. Interacts with the chaperonin GroEL.

The protein localises to the cytoplasm. Functionally, together with the chaperonin GroEL, plays an essential role in assisting protein folding. The GroEL-GroES system forms a nano-cage that allows encapsulation of the non-native substrate proteins and provides a physical environment optimized to promote and accelerate protein folding. GroES binds to the apical surface of the GroEL ring, thereby capping the opening of the GroEL channel. The sequence is that of Co-chaperonin GroES from Leuconostoc citreum (strain KM20).